The primary structure comprises 411 residues: Glycerol-3-phosphate dehydrogenase [NAD(+)] (411 aa).

NAD(+)-binding positions include 71–76 (GSGNWG), phenylalanine 103, and phenylalanine 159. Lysine 182 provides a ligand contact to substrate. Alanine 215 is an NAD(+) binding site. Lysine 275 functions as the Proton acceptor in the catalytic mechanism. Residues arginine 340 and glutamine 369 each coordinate NAD(+). Substrate is bound at residue 340-341 (RN).

This sequence belongs to the NAD-dependent glycerol-3-phosphate dehydrogenase family.

The enzyme catalyses sn-glycerol 3-phosphate + NAD(+) = dihydroxyacetone phosphate + NADH + H(+). In Lachancea thermotolerans (Yeast), this protein is Glycerol-3-phosphate dehydrogenase [NAD(+)] (GPD).